The following is a 354-amino-acid chain: DNA polymerase IV (354 aa).

Residues 8–189 (IIHVDMDCFY…LPLEKIPGVG (182 aa)) enclose the UmuC domain. Positions 12 and 107 each coordinate Mg(2+). Glu108 is a catalytic residue.

Belongs to the DNA polymerase type-Y family. Monomer. Mg(2+) serves as cofactor.

The protein localises to the cytoplasm. It catalyses the reaction DNA(n) + a 2'-deoxyribonucleoside 5'-triphosphate = DNA(n+1) + diphosphate. Functionally, poorly processive, error-prone DNA polymerase involved in untargeted mutagenesis. Copies undamaged DNA at stalled replication forks, which arise in vivo from mismatched or misaligned primer ends. These misaligned primers can be extended by PolIV. Exhibits no 3'-5' exonuclease (proofreading) activity. May be involved in translesional synthesis, in conjunction with the beta clamp from PolIII. The chain is DNA polymerase IV from Vibrio parahaemolyticus serotype O3:K6 (strain RIMD 2210633).